Reading from the N-terminus, the 463-residue chain is L-seryl-tRNA(Sec) selenium transferase (463 aa).

At Lys-295 the chain carries N6-(pyridoxal phosphate)lysine.

The protein belongs to the SelA family. In terms of assembly, homodecamer; pentamer of dimers. Binds only one seryl-tRNA(Sec) per dimer. It depends on pyridoxal 5'-phosphate as a cofactor.

The protein localises to the cytoplasm. It carries out the reaction L-seryl-tRNA(Sec) + selenophosphate + H(+) = L-selenocysteinyl-tRNA(Sec) + phosphate. It functions in the pathway aminoacyl-tRNA biosynthesis; selenocysteinyl-tRNA(Sec) biosynthesis; selenocysteinyl-tRNA(Sec) from L-seryl-tRNA(Sec) (bacterial route): step 1/1. In terms of biological role, converts seryl-tRNA(Sec) to selenocysteinyl-tRNA(Sec) required for selenoprotein biosynthesis. This Escherichia coli (strain 55989 / EAEC) protein is L-seryl-tRNA(Sec) selenium transferase.